Consider the following 187-residue polypeptide: Late expression factor 11 (187 aa).

2 disordered regions span residues methionine 1 to aspartate 24 and glycine 119 to glutamine 187.

The protein belongs to the baculoviridae LEF-11 family.

Its function is as follows. Involved in late/very late gene activation. The chain is Late expression factor 11 (LEF-11) from Lymantria dispar multicapsid nuclear polyhedrosis virus (LdMNPV).